A 1412-amino-acid polypeptide reads, in one-letter code: uncharacterized protein (1412 aa).

A disordered region spans residues 1 to 22 (MESINVVNSVEDLPGFNPDENV). 2 coiled-coil regions span residues 317-377 (NNDF…ILRH) and 732-800 (SKEA…SDDE). Positions 778–808 (SRKRKHEDIVKEHEAEKRDSDDEDDFEEVDV) are disordered. The span at 783–797 (HEDIVKEHEAEKRDS) shows a compositional bias: basic and acidic residues. Residues 798–808 (DDEDDFEEVDV) are compositionally biased toward acidic residues.

This is an uncharacterized protein from Magallana gigas (Pacific oyster).